A 461-amino-acid polypeptide reads, in one-letter code: Signal recognition particle receptor FtsY (461 aa).

A TPR repeat occupies 105-138; that stretch reads FESLYNVAKIYHQLEKPDKALEYAQRAEKLVPYE. GTP-binding positions include 267–274, 349–353, and 413–416; these read GVNGSGKT, DTAGR, and TKLD.

Belongs to the GTP-binding SRP family. FtsY subfamily. As to quaternary structure, part of the signal recognition particle protein translocation system, which is composed of SRP and FtsY.

It localises to the cell inner membrane. Its subcellular location is the cytoplasm. The catalysed reaction is GTP + H2O = GDP + phosphate + H(+). Involved in targeting and insertion of nascent membrane proteins into the cytoplasmic membrane. Acts as a receptor for the complex formed by the signal recognition particle (SRP) and the ribosome-nascent chain (RNC). This is Signal recognition particle receptor FtsY from Aquifex aeolicus (strain VF5).